Here is a 463-residue protein sequence, read N- to C-terminus: MSKLILSYRIGLGLVVGAAAGAVIYIVFRRNRKKTRKWTSKQNGYYSQKGDELDTSNNLQAIPGEADILTGSRGEQLDLLNRLDYVLSSIVELHQEVETLRSSLHGLAEDIVGEVRTHLEENQRTLRRRRFLPHRERTDSTGSSSIYFTATSGAAHTDAESEGGYSTAYAESDFERESSRASEAEEEDEVSCETIRTMRRDSVDLVTDDDDDEATTIATDPVDEELTLLLQKSDELHSGSTEQQREGFQLLLNNKLLYGDHQEFLWRLARSYSDMCTIAEDAQEKKSFASEGKEEAEAALQKGDQNAECHKWFAILCGQLSEHEGIQKRIQTGYLFKEHIEKAISLKPGDARCYYLLGRWCYEVSNLGWLERKTASALYENPPTATVHEALQNFLKAEDLTPGFSKAARVLIAKCYKDLGNNATAAHWLKLAADLPNVTQEDRESTTTIEEMLPATAEEELLV.

The Mitochondrial intermembrane segment spans residues 1–4 (MSKL). A helical membrane pass occupies residues 5 to 27 (ILSYRIGLGLVVGAAAGAVIYIV). At 28–463 (FRRNRKKTRK…PATAEEELLV (436 aa)) the chain is on the cytoplasmic side. Residues 146–161 (IYFTATSGAAHTDAES) carry the FFAT motif. Positions 153-192 (GAAHTDAESEGGYSTAYAESDFERESSRASEAEEEDEVSC) are disordered. A compositionally biased stretch (basic and acidic residues) spans 173-183 (DFERESSRASE). Positions 279–302 (AEDAQEKKSFASEGKEEAEAALQK) form a coiled coil.

It belongs to the RMDN family. As to quaternary structure, interacts with PTPN2. Interacts with microtubules. Interacts with VAPB. Interacts (FFAT motif) with MOSPD2 (via MSP domain).

Its subcellular location is the mitochondrion outer membrane. The protein localises to the cytoplasm. It is found in the nucleus. The protein resides in the cytoskeleton. It localises to the spindle. Its subcellular location is the spindle pole. Involved in cellular calcium homeostasis regulation. The protein is Regulator of microtubule dynamics protein 3 (rmdn3) of Xenopus laevis (African clawed frog).